A 384-amino-acid chain; its full sequence is Troponin T (384 aa).

A compositionally biased stretch (acidic residues) spans 1 to 15 (MSDEEEYSEEEEEVP). 4 disordered regions span residues 1–23 (MSDE…PRHS), 61–169 (RAKE…KEQL), 237–257 (LRHK…KYPP), and 313–384 (PKWF…EEEE). Basic and acidic residues-rich tracts occupy residues 61–74 (RAKE…LKDK) and 81–126 (MRAD…EKKR). Positions 316–327 (FGERPGKKKGDP) are enriched in basic and acidic residues. Over residues 328-384 (ESPEEEEVKADAGVDDELEEPTFEPEPEPEPEEEAAEEEAEEEEEEEEEEEEEEEEE) the composition is skewed to acidic residues.

The protein belongs to the troponin T family.

Its function is as follows. Troponin T is the tropomyosin-binding subunit of troponin, the thin filament regulatory complex which confers calcium-sensitivity to striated muscle actomyosin ATPase activity. This Periplaneta americana (American cockroach) protein is Troponin T (TNT).